The following is a 275-amino-acid chain: Large ribosomal subunit protein uL2 (275 aa).

The segment at 222 to 275 (GVAMNPVDHPHGGGEGRNKGRHPTSPWGQKSKGLKTRNNKRTDSMIIRRRAKKK) is disordered. Residues 229–239 (DHPHGGGEGRN) are compositionally biased toward basic and acidic residues.

The protein belongs to the universal ribosomal protein uL2 family. Part of the 50S ribosomal subunit. Forms a bridge to the 30S subunit in the 70S ribosome.

Its function is as follows. One of the primary rRNA binding proteins. Required for association of the 30S and 50S subunits to form the 70S ribosome, for tRNA binding and peptide bond formation. It has been suggested to have peptidyltransferase activity; this is somewhat controversial. Makes several contacts with the 16S rRNA in the 70S ribosome. In Psychrobacter arcticus (strain DSM 17307 / VKM B-2377 / 273-4), this protein is Large ribosomal subunit protein uL2.